Reading from the N-terminus, the 216-residue chain is DNA gyrase subunit B (216 aa).

The region spanning 140–216 (SELYLVEGDS…PDKLRYHKII (77 aa)) is the Toprim domain.

This sequence belongs to the type II topoisomerase GyrB family. As to quaternary structure, heterotetramer, composed of two GyrA and two GyrB chains. In the heterotetramer, GyrA contains the active site tyrosine that forms a transient covalent intermediate with DNA, while GyrB binds cofactors and catalyzes ATP hydrolysis.

The protein resides in the cytoplasm. It carries out the reaction ATP-dependent breakage, passage and rejoining of double-stranded DNA.. In terms of biological role, a type II topoisomerase that negatively supercoils closed circular double-stranded (ds) DNA in an ATP-dependent manner to modulate DNA topology and maintain chromosomes in an underwound state. Negative supercoiling favors strand separation, and DNA replication, transcription, recombination and repair, all of which involve strand separation. Also able to catalyze the interconversion of other topological isomers of dsDNA rings, including catenanes and knotted rings. Type II topoisomerases break and join 2 DNA strands simultaneously in an ATP-dependent manner. In Acinetobacter sp. (strain T4), this protein is DNA gyrase subunit B (gyrB).